The following is a 118-amino-acid chain: NADPH-dependent 7-cyano-7-deazaguanine reductase (118 aa).

The Thioimide intermediate role is filled by C34. Residue D41 is the Proton donor of the active site. Substrate-binding positions include 56-58 (VEL) and 75-76 (HE).

The protein belongs to the GTP cyclohydrolase I family. QueF type 1 subfamily.

The protein resides in the cytoplasm. The catalysed reaction is 7-aminomethyl-7-carbaguanine + 2 NADP(+) = 7-cyano-7-deazaguanine + 2 NADPH + 3 H(+). The protein operates within tRNA modification; tRNA-queuosine biosynthesis. Its function is as follows. Catalyzes the NADPH-dependent reduction of 7-cyano-7-deazaguanine (preQ0) to 7-aminomethyl-7-deazaguanine (preQ1). This Halorhodospira halophila (strain DSM 244 / SL1) (Ectothiorhodospira halophila (strain DSM 244 / SL1)) protein is NADPH-dependent 7-cyano-7-deazaguanine reductase.